Here is a 276-residue protein sequence, read N- to C-terminus: UPF0276 protein CV_3513 (276 aa).

Belongs to the UPF0276 family.

The sequence is that of UPF0276 protein CV_3513 from Chromobacterium violaceum (strain ATCC 12472 / DSM 30191 / JCM 1249 / CCUG 213 / NBRC 12614 / NCIMB 9131 / NCTC 9757 / MK).